Reading from the N-terminus, the 1508-residue chain is Calponin homology domain-containing protein DDB_G0272472 (1508 aa).

6 disordered regions span residues 1-165, 197-290, 309-518, 531-561, 680-706, and 1036-1391; these read MFRN…KNDF, DSEE…NLSP, DFKS…TSIV, AANATTTNNDNNNNNNNTSSPTNKSTNLFND, KEKQDQLEKQRKLEQQRLQKEKDEKEL, and KIEK…KKSA. A compositionally biased stretch (low complexity) spans 81 to 107; the sequence is SSSPSTSTTTTTKSSSTTTTTTTSSSS. The segment covering 208–222 has biased composition (basic and acidic residues); it reads PIKKKQSNDLEKNIF. Composition is skewed to low complexity over residues 234 to 251, 263 to 290, and 315 to 332; these read KQSTVTKPKQPQQQQKQP, FGDSSLSLDSPLLASKSSPPKSSVNLSP, and SNNTTTVKKAVPISKSKP. Basic and acidic residues-rich tracts occupy residues 337 to 346 and 362 to 371; these read QKEEIKEVST and VDEKPKERST. Over residues 380–391 the composition is skewed to polar residues; that stretch reads KTVTVKSNNSFE. A compositionally biased stretch (low complexity) spans 395–438; it reads FGSTTTNDDGGDNDFSFTPATTPSSSSSTKATTTSPSSTTTTKS. Residues 439–452 are compositionally biased toward polar residues; that stretch reads NINIGQKSNKSVDQ. Positions 455 to 498 form a coiled coil; sequence QFLNDIFQQEEQDKKRREEEAKLKQQQKQKEKEQIKDEIDDLFK. Residues 465 to 498 are compositionally biased toward basic and acidic residues; that stretch reads EQDKKRREEEAKLKQQQKQKEKEQIKDEIDDLFK. Low complexity-rich tracts occupy residues 500–516 and 531–557; these read SKPTTTTTSTPSKSTTS and AANATTTNNDNNNNNNNTSSPTNKSTN. Residues 1036–1164 show a composition bias toward basic and acidic residues; the sequence is KIEKEKEERD…DQEEKEKQLK (129 aa). Composition is skewed to low complexity over residues 1165–1181 and 1189–1206; these read EQQQQQKVIIPTTTTTT and DSDALLNLPDSASSSSHS. Residues 1216-1225 show a composition bias toward basic residues; that stretch reads SKAKGRKKPT. Basic and acidic residues predominate over residues 1226–1235; sequence RRELTKDGNR. Residues 1333-1355 are compositionally biased toward low complexity; the sequence is PTVTQTTTTTTTPPTTPPSSSVQ. The span at 1362–1374 shows a compositional bias: polar residues; sequence RSFSGSSFMGINS. Residues 1397–1504 form the Calponin-homology (CH) domain; sequence MKALDVLLQW…YLSEFFKVMK (108 aa).

The sequence is that of Calponin homology domain-containing protein DDB_G0272472 from Dictyostelium discoideum (Social amoeba).